The following is a 660-amino-acid chain: PAN2-PAN3 deadenylation complex subunit PAN3 (660 aa).

Residues 7-36 (SAKDTFCKNVLIYGYCKYENKGCAFSHTVK) form a C3H1-type zinc finger. Disordered stretches follow at residues 36–60 (KPTS…TNAD) and 150–186 (SPVM…PTSA). Over residues 43–59 (GSQGSNATTNSSGNTNA) the composition is skewed to low complexity. Positions 59–79 (ADMKKKFNFNTPSFQPSTVPN) match the PABPC-interacting motif-2 (PAM-2) motif. Polar residues predominate over residues 150-159 (SPVMAQSVST). Positions 252–528 (QTLPRSNLPD…LQEFNRNHLS (277 aa)) are pseudokinase domain. ATP is bound by residues Arg304, 358 to 365 (DYFPNSNT), and 415 to 416 (SK). Residues 529 to 567 (RRILNFCSNAQDSQDFMESQLSTELENARVFRLITKLNF) are a coiled coil. Positions 568–660 (IIDRPEYDND…DSAFRTLTRG (93 aa)) are knob domain.

It belongs to the protein kinase superfamily. PAN3 family. As to quaternary structure, homodimer. Forms a heterotrimer with a catalytic subunit PAN2 to form the poly(A)-nuclease (PAN) deadenylation complex. Interacts (via PAM-2 motif) with poly(A)-binding protein PAB1 (via PABC domain), conferring substrate specificity of the enzyme complex.

The protein localises to the cytoplasm. In terms of biological role, regulatory subunit of the poly(A)-nuclease (PAN) deadenylation complex, one of two cytoplasmic mRNA deadenylases involved in mRNA turnover. PAN specifically shortens poly(A) tails of RNA and the activity is stimulated by poly(A)-binding protein PAB1. PAN deadenylation is followed by rapid degradation of the shortened mRNA tails by the CCR4-NOT complex. Deadenylated mRNAs are then degraded by two alternative mechanisms, namely exosome-mediated 3'-5' exonucleolytic degradation, or deadenylation-dependent mRNA decaping and subsequent 5'-3' exonucleolytic degradation by XRN1. May also be involved in post-transcriptional maturation of mRNA poly(A) tails. PAN3 acts as a positive regulator for PAN activity, recruiting the catalytic subunit PAN2 to mRNA via its interaction with RNA and with PAB1. This is PAN2-PAN3 deadenylation complex subunit PAN3 from Debaryomyces hansenii (strain ATCC 36239 / CBS 767 / BCRC 21394 / JCM 1990 / NBRC 0083 / IGC 2968) (Yeast).